We begin with the raw amino-acid sequence, 543 residues long: MTNYIFVTGGVVSSLGKGIAAASLAAILEARGLNVTMLKLDPYINVDPGTMSPIQHGEVFVTDDGAETDLDLGHYERFIRTRMTKRNNFTTGRVYEEVIKRERRGDYLGATIQVIPHITNEIKRRIIAGAEGVDVAIVEIGGTVGDIESQPFLEAIRQLGTEVGRDHAMYMHLTLVPYIAVSGEVKTKPTQHSVKELRSIGIQPDILVCRSENALPSNERSKIALFTNVADKAVISLKDANSIYKIPAALKAQGMDELVVQRFGLECPEADLTEWEQVLYAESNPVGEVTIGMVGKYVELPDAYKSVNEALKHAGLKNRLTVNIRYVDSQDIESKGEQILHGLDAILVPGGFGERGIEGKIAAAKYAREQKVPYLGICLGMQVAIIEFARNVAGMESANSSEFDPQTPYPVVGLITEWLDADGSTAQRSEASDLGGTMRLGSQLCHLIPGSKVHDLYGSAEIYERHRHRYEVNNNLRDKLEASGLKVTGLSTDKRLVEVIELGDHPWFVAGQFHPEFNSTPRDGHPLFEGFVKAAGEYYKNNN.

The segment at 1–265 (MTNYIFVTGG…DELVVQRFGL (265 aa)) is amidoligase domain. Ser13 lines the CTP pocket. Ser13 serves as a coordination point for UTP. Residues 14–19 (SLGKGI) and Asp71 contribute to the ATP site. Residues Asp71 and Glu139 each contribute to the Mg(2+) site. CTP-binding positions include 146–148 (DIE), 186–191 (KTKPTQ), and Lys222. UTP contacts are provided by residues 186–191 (KTKPTQ) and Lys222. 238-240 (KDA) is an ATP binding site. Residues 290–541 (TIGMVGKYVE…VKAAGEYYKN (252 aa)) form the Glutamine amidotransferase type-1 domain. Gly351 provides a ligand contact to L-glutamine. Cys378 functions as the Nucleophile; for glutamine hydrolysis in the catalytic mechanism. L-glutamine contacts are provided by residues 379–382 (LGMQ), Glu402, and Arg469. Residues His514 and Glu516 contribute to the active site.

This sequence belongs to the CTP synthase family. Homotetramer.

The enzyme catalyses UTP + L-glutamine + ATP + H2O = CTP + L-glutamate + ADP + phosphate + 2 H(+). It catalyses the reaction L-glutamine + H2O = L-glutamate + NH4(+). The catalysed reaction is UTP + NH4(+) + ATP = CTP + ADP + phosphate + 2 H(+). Its pathway is pyrimidine metabolism; CTP biosynthesis via de novo pathway; CTP from UDP: step 2/2. Its activity is regulated as follows. Allosterically activated by GTP, when glutamine is the substrate; GTP has no effect on the reaction when ammonia is the substrate. The allosteric effector GTP functions by stabilizing the protein conformation that binds the tetrahedral intermediate(s) formed during glutamine hydrolysis. Inhibited by the product CTP, via allosteric rather than competitive inhibition. Its function is as follows. Catalyzes the ATP-dependent amination of UTP to CTP with either L-glutamine or ammonia as the source of nitrogen. Regulates intracellular CTP levels through interactions with the four ribonucleotide triphosphates. The chain is CTP synthase from Pseudoalteromonas atlantica (strain T6c / ATCC BAA-1087).